We begin with the raw amino-acid sequence, 344 residues long: Phenylalanine--tRNA ligase alpha subunit (344 aa).

Glu-255 contributes to the Mg(2+) binding site.

The protein belongs to the class-II aminoacyl-tRNA synthetase family. Phe-tRNA synthetase alpha subunit type 1 subfamily. Tetramer of two alpha and two beta subunits. Requires Mg(2+) as cofactor.

The protein localises to the cytoplasm. The enzyme catalyses tRNA(Phe) + L-phenylalanine + ATP = L-phenylalanyl-tRNA(Phe) + AMP + diphosphate + H(+). In Sulfurihydrogenibium sp. (strain YO3AOP1), this protein is Phenylalanine--tRNA ligase alpha subunit.